The primary structure comprises 985 residues: Probable oxidoreductase YjgC (985 aa).

The 2Fe-2S ferredoxin-type domain maps to 3–79; that stretch reads GKKTITINGV…GDVIDTLSPD (77 aa). The [2Fe-2S] cluster site is built by Cys-37, Cys-48, Cys-51, and Cys-63. The 4Fe-4S His(Cys)3-ligated-type domain maps to 79-119; sequence DVKKAQVIGMDKILYNHELYCTVCDYNNGGCEIHNTVKEMK. Residues His-95, Cys-99, Cys-102, Cys-109, Cys-148, Cys-151, Cys-154, Cys-158, Cys-191, Cys-194, Cys-197, Cys-201, Cys-265, Cys-268, Cys-272, and Cys-300 each contribute to the [4Fe-4S] cluster site. 2 consecutive 4Fe-4S ferredoxin-type domains span residues 139–170 and 182–211; these read PFYRYDPDQCILCGRCVEACQDVQVTETLTID and NDVPINESSCVSCGHCSTVCPCNAMMEKGM. In terms of domain architecture, 4Fe-4S Mo/W bis-MGD-type spans 258–314; it reads IKKTKTVCTYCGVGCSFDVWTKGRDILKVEPQEEAPANGISTCVKGKFGWDFVNSEE.

The protein in the C-terminal section; belongs to the prokaryotic molybdopterin-containing oxidoreductase family. The cofactor is [2Fe-2S] cluster. [4Fe-4S] cluster is required as a cofactor. Mo-bis(molybdopterin guanine dinucleotide) serves as cofactor.

This chain is Probable oxidoreductase YjgC (yjgC), found in Bacillus subtilis (strain 168).